The following is a 64-amino-acid chain: Large ribosomal subunit protein bL35 (64 aa).

This sequence belongs to the bacterial ribosomal protein bL35 family.

The polypeptide is Large ribosomal subunit protein bL35 (Shewanella putrefaciens (strain CN-32 / ATCC BAA-453)).